A 595-amino-acid polypeptide reads, in one-letter code: Proline--tRNA ligase (595 aa).

This sequence belongs to the class-II aminoacyl-tRNA synthetase family. ProS type 1 subfamily. As to quaternary structure, homodimer.

Its subcellular location is the cytoplasm. The catalysed reaction is tRNA(Pro) + L-proline + ATP = L-prolyl-tRNA(Pro) + AMP + diphosphate. Catalyzes the attachment of proline to tRNA(Pro) in a two-step reaction: proline is first activated by ATP to form Pro-AMP and then transferred to the acceptor end of tRNA(Pro). As ProRS can inadvertently accommodate and process non-cognate amino acids such as alanine and cysteine, to avoid such errors it has two additional distinct editing activities against alanine. One activity is designated as 'pretransfer' editing and involves the tRNA(Pro)-independent hydrolysis of activated Ala-AMP. The other activity is designated 'posttransfer' editing and involves deacylation of mischarged Ala-tRNA(Pro). The misacylated Cys-tRNA(Pro) is not edited by ProRS. This chain is Proline--tRNA ligase, found in Treponema denticola (strain ATCC 35405 / DSM 14222 / CIP 103919 / JCM 8153 / KCTC 15104).